A 235-amino-acid chain; its full sequence is 2-C-methyl-D-erythritol 4-phosphate cytidylyltransferase (235 aa).

Belongs to the IspD/TarI cytidylyltransferase family. IspD subfamily.

It carries out the reaction 2-C-methyl-D-erythritol 4-phosphate + CTP + H(+) = 4-CDP-2-C-methyl-D-erythritol + diphosphate. Its pathway is isoprenoid biosynthesis; isopentenyl diphosphate biosynthesis via DXP pathway; isopentenyl diphosphate from 1-deoxy-D-xylulose 5-phosphate: step 2/6. In terms of biological role, catalyzes the formation of 4-diphosphocytidyl-2-C-methyl-D-erythritol from CTP and 2-C-methyl-D-erythritol 4-phosphate (MEP). In Pseudomonas putida (strain ATCC 47054 / DSM 6125 / CFBP 8728 / NCIMB 11950 / KT2440), this protein is 2-C-methyl-D-erythritol 4-phosphate cytidylyltransferase.